The primary structure comprises 205 residues: Holliday junction branch migration complex subunit RuvA (205 aa).

Positions 1–64 (MIGKLKGLID…EDQIKLFGFR (64 aa)) are domain I. A domain II region spans residues 65–143 (SDLEREWFRL…GFASVDPAVA (79 aa)). Positions 144 to 153 (HLSGAIEERS) are flexible linker. The domain III stretch occupies residues 153 to 205 (SAPRPVADAISALVNLGYGQPQAAAAIAAAARSAGDAAQTAQLIKLGLKELSK).

Belongs to the RuvA family. As to quaternary structure, homotetramer. Forms an RuvA(8)-RuvB(12)-Holliday junction (HJ) complex. HJ DNA is sandwiched between 2 RuvA tetramers; dsDNA enters through RuvA and exits via RuvB. An RuvB hexamer assembles on each DNA strand where it exits the tetramer. Each RuvB hexamer is contacted by two RuvA subunits (via domain III) on 2 adjacent RuvB subunits; this complex drives branch migration. In the full resolvosome a probable DNA-RuvA(4)-RuvB(12)-RuvC(2) complex forms which resolves the HJ.

It is found in the cytoplasm. Functionally, the RuvA-RuvB-RuvC complex processes Holliday junction (HJ) DNA during genetic recombination and DNA repair, while the RuvA-RuvB complex plays an important role in the rescue of blocked DNA replication forks via replication fork reversal (RFR). RuvA specifically binds to HJ cruciform DNA, conferring on it an open structure. The RuvB hexamer acts as an ATP-dependent pump, pulling dsDNA into and through the RuvAB complex. HJ branch migration allows RuvC to scan DNA until it finds its consensus sequence, where it cleaves and resolves the cruciform DNA. The chain is Holliday junction branch migration complex subunit RuvA from Rhodopseudomonas palustris (strain BisA53).